The primary structure comprises 245 residues: Derlin-1 (245 aa).

Over 1–17 (MDAGVWYRSLPRFTRYW) the chain is Cytoplasmic. The chain crosses the membrane as a helical span at residues 18–38 (LTATVVLSMLCRFDVIPLHWL). At 39 to 58 (HLDRSAVFSKLQLWRCMTSL) the chain is on the lumenal side. Residues 59 to 79 (FVFPISSNTAFHFLINCFFIV) traverse the membrane as a helical segment. The Cytoplasmic portion of the chain corresponds to 80–99 (QYSSKLEKDQYSRSPADYLY). A helical transmembrane segment spans residues 100–120 (LLIVSAVLANIGGMIFNVYFL). Topologically, residues 121–156 (MDTLVLAITYIWCQLNKDVTVSFWFGTRFKAMYLPW) are lumenal. The chain crosses the membrane as a helical span at residues 157–177 (VLAAFEFIFHFSLASLVGIFV). Residues 178–245 (GHVYYFFKFQ…WGRGMTLGRN (68 aa)) lie on the Cytoplasmic side of the membrane. The interval 218–245 (FGLPPESRAPPRQATESPWGRGMTLGRN) is disordered.

It belongs to the derlin family.

It is found in the endoplasmic reticulum membrane. May be involved in the degradation process of specific misfolded endoplasmic reticulum (ER) luminal proteins. May also involved in endoplasmic reticulum stress-induced pre-emptive quality control, a mechanism that selectively attenuates the translocation of newly synthesized proteins into the endoplasmic reticulum and reroutes them to the cytosol for proteasomal degradation. The chain is Derlin-1 from Drosophila melanogaster (Fruit fly).